The chain runs to 229 residues: Triosephosphate isomerase (229 aa).

9–11 provides a ligand contact to substrate; that stretch reads NLK. Catalysis depends on His-93, which acts as the Electrophile. Glu-141 functions as the Proton acceptor in the catalytic mechanism. Substrate-binding positions include Ile-146, Gly-181, and 202–203; that span reads AS.

This sequence belongs to the triosephosphate isomerase family. Homotetramer; dimer of dimers.

The protein resides in the cytoplasm. It catalyses the reaction D-glyceraldehyde 3-phosphate = dihydroxyacetone phosphate. It functions in the pathway carbohydrate biosynthesis; gluconeogenesis. Its pathway is carbohydrate degradation; glycolysis; D-glyceraldehyde 3-phosphate from glycerone phosphate: step 1/1. In terms of biological role, involved in the gluconeogenesis. Catalyzes stereospecifically the conversion of dihydroxyacetone phosphate (DHAP) to D-glyceraldehyde-3-phosphate (G3P). This Pyrobaculum islandicum (strain DSM 4184 / JCM 9189 / GEO3) protein is Triosephosphate isomerase.